A 556-amino-acid polypeptide reads, in one-letter code: Probable Xaa-Pro aminopeptidase SS1G_06948 (556 aa).

4 residues coordinate Mn(2+): aspartate 305, aspartate 316, glutamate 460, and glutamate 501.

Belongs to the peptidase M24B family. The cofactor is Mn(2+).

The enzyme catalyses Release of any N-terminal amino acid, including proline, that is linked to proline, even from a dipeptide or tripeptide.. Its function is as follows. Catalyzes the removal of a penultimate prolyl residue from the N-termini of peptides. This chain is Probable Xaa-Pro aminopeptidase SS1G_06948, found in Sclerotinia sclerotiorum (strain ATCC 18683 / 1980 / Ss-1) (White mold).